Reading from the N-terminus, the 122-residue chain is MIIGVGIDVAEIERFGAALERTPQLADRLFVGSELTLPSGERRGIASLAARFAAKEALAKALGAPGGLLWSDAEVWVEESGQPRLRVSGTVAARAAELGVRGWHVSLSHDAGVASAVVIAEG.

Residues aspartate 8 and glutamate 56 each coordinate Mg(2+).

The protein belongs to the P-Pant transferase superfamily. AcpS family. Mg(2+) serves as cofactor.

Its subcellular location is the cytoplasm. It carries out the reaction apo-[ACP] + CoA = holo-[ACP] + adenosine 3',5'-bisphosphate + H(+). Its function is as follows. Transfers the 4'-phosphopantetheine moiety from coenzyme A to a Ser of acyl-carrier-protein. The polypeptide is Holo-[acyl-carrier-protein] synthase (Streptomyces griseus subsp. griseus (strain JCM 4626 / CBS 651.72 / NBRC 13350 / KCC S-0626 / ISP 5235)).